A 456-amino-acid chain; its full sequence is Probable hexose phosphate transport protein (456 aa).

11 helical membrane passes run 34–54, 70–90, 113–133, 161–181, 185–205, 257–277, 302–322, 331–351, 362–382, 394–414, and 421–441; these read IFYS…SFTF, LGII…VSGV, IFFG…INGW, VWST…GIAI, GWRG…FILI, YVLS…IYVV, LCVS…GWLS, GPMN…LWGT, AFLF…GLAA, ASGF…YPLG, and GWHG…LFFL.

The protein belongs to the major facilitator superfamily. Organophosphate:Pi antiporter (OPA) (TC 2.A.1.4) family.

It is found in the cell membrane. Its function is as follows. Transport protein for sugar phosphate uptake. In Chlamydia muridarum (strain MoPn / Nigg), this protein is Probable hexose phosphate transport protein.